Reading from the N-terminus, the 354-residue chain is 4-hydroxy-3-methylbut-2-en-1-yl diphosphate synthase (flavodoxin) (354 aa).

[4Fe-4S] cluster is bound by residues cysteine 263, cysteine 266, cysteine 298, and glutamate 305.

The protein belongs to the IspG family. The cofactor is [4Fe-4S] cluster.

It carries out the reaction (2E)-4-hydroxy-3-methylbut-2-enyl diphosphate + oxidized [flavodoxin] + H2O + 2 H(+) = 2-C-methyl-D-erythritol 2,4-cyclic diphosphate + reduced [flavodoxin]. It functions in the pathway isoprenoid biosynthesis; isopentenyl diphosphate biosynthesis via DXP pathway; isopentenyl diphosphate from 1-deoxy-D-xylulose 5-phosphate: step 5/6. In terms of biological role, converts 2C-methyl-D-erythritol 2,4-cyclodiphosphate (ME-2,4cPP) into 1-hydroxy-2-methyl-2-(E)-butenyl 4-diphosphate. This Fusobacterium nucleatum subsp. nucleatum (strain ATCC 25586 / DSM 15643 / BCRC 10681 / CIP 101130 / JCM 8532 / KCTC 2640 / LMG 13131 / VPI 4355) protein is 4-hydroxy-3-methylbut-2-en-1-yl diphosphate synthase (flavodoxin).